Consider the following 134-residue polypeptide: Profilin-1 (134 aa).

Cys-13 and Cys-118 are joined by a disulfide. Residues 84-100 (AVIRGKKGSGGITIKKT) carry the Involved in PIP2 interaction motif. Thr-114 carries the post-translational modification Phosphothreonine.

Belongs to the profilin family. Occurs in many kinds of cells as a complex with monomeric actin in a 1:1 ratio. Post-translationally, phosphorylated by MAP kinases.

It localises to the cytoplasm. The protein resides in the cytoskeleton. In terms of biological role, binds to actin and affects the structure of the cytoskeleton. At high concentrations, profilin prevents the polymerization of actin, whereas it enhances it at low concentrations. By binding to PIP2, it inhibits the formation of IP3 and DG. The chain is Profilin-1 (PRO1) from Olea europaea (Common olive).